A 662-amino-acid chain; its full sequence is DNA ligase (662 aa).

NAD(+) contacts are provided by residues 31–35 (DKDYD) and 79–80 (SL). Catalysis depends on K121, which acts as the N6-AMP-lysine intermediate. 3 residues coordinate NAD(+): R143, E177, and K313. Positions 406, 409, 422, and 428 each coordinate Zn(2+). The BRCT domain occupies 586–662 (VLESPFMGKT…LSEEEFENMI (77 aa)).

The protein belongs to the NAD-dependent DNA ligase family. LigA subfamily. Requires Mg(2+) as cofactor. Mn(2+) serves as cofactor.

The catalysed reaction is NAD(+) + (deoxyribonucleotide)n-3'-hydroxyl + 5'-phospho-(deoxyribonucleotide)m = (deoxyribonucleotide)n+m + AMP + beta-nicotinamide D-nucleotide.. DNA ligase that catalyzes the formation of phosphodiester linkages between 5'-phosphoryl and 3'-hydroxyl groups in double-stranded DNA using NAD as a coenzyme and as the energy source for the reaction. It is essential for DNA replication and repair of damaged DNA. In Clostridium perfringens (strain ATCC 13124 / DSM 756 / JCM 1290 / NCIMB 6125 / NCTC 8237 / Type A), this protein is DNA ligase.